Consider the following 399-residue polypeptide: Glutathione S-transferase LANCL1 (399 aa).

Alanine 2 carries the post-translational modification N-acetylalanine. Lysine 142 is subject to N6-acetyllysine. A Zn(2+)-binding site is contributed by cysteine 276. Lysine 317 contributes to the glutathione binding site. Zn(2+) is bound by residues cysteine 322 and histidine 323. 364-367 serves as a coordination point for glutathione; sequence RTPD.

It belongs to the LanC-like protein family. Interacts with the C-terminal of STOM. Interacts with the EPS8 SH3 domain. Interaction with EPS8 is inhibited by glutathione binding. Strongly expressed in the brain, testis and skeletal muscle. Expressed in the neurons of the cerebellum, the germinal cells of the seminiferous tubules in testis, in liver hepoatocytes and in cardiac myocytes.

The protein localises to the cytoplasm. It localises to the cell membrane. It catalyses the reaction RX + glutathione = an S-substituted glutathione + a halide anion + H(+). The catalysed reaction is 1-chloro-2,4-dinitrobenzene + glutathione = 2,4-dinitrophenyl-S-glutathione + chloride + H(+). Functions as a glutathione transferase. Catalyzes conjugation of the glutathione (GSH) to artificial substrates 1-chloro-2,4-dinitrobenzene (CDNB) and p-nitrophenyl acetate. Mitigates neuronal oxidative stress during normal postnatal development and in response to oxidative stresses probably through GSH antioxidant defense mechanism. May play a role in EPS8 signaling. Binds glutathione. The protein is Glutathione S-transferase LANCL1 of Rattus norvegicus (Rat).